Here is a 585-residue protein sequence, read N- to C-terminus: T-cell surface protein tactile (585 aa).

An N-terminal signal peptide occupies residues 1–21; sequence MEKKWKYCAVYYIIQIHFVKG. The Extracellular segment spans residues 22–519; sequence VWEKTVNTEE…IVVNKPKDGM (498 aa). The Ig-like V-type 1 domain occupies 38-125; it reads GSDVNLTCQT…YECMLVLYPE (88 aa). N-linked (GlcNAc...) asparagine glycans are attached at residues Asn-42, Asn-97, Asn-107, Asn-148, Asn-156, Asn-166, Asn-200, Asn-215, Asn-277, Asn-278, Asn-300, Asn-350, and Asn-368. Cysteines 45 and 118 form a disulfide. Residues 156 to 238 enclose the Ig-like V-type 2 domain; that stretch reads NQTLEIPCFQ…YRLHLSPVQI (83 aa). Cysteines 163 and 247 form a disulfide. The 107-residue stretch at 269–375 folds into the Ig-like C2-type domain; the sequence is PEIPVIVENN…VWNISSEKIT (107 aa). A disulfide bridge connects residues Cys-290 and Cys-355. Polar residues-rich tracts occupy residues 385–418, 426–452, and 460–475; these read TDPPLSVTESTLDTQPSPASSVSPARYPATSSVT, RPNTTPQPSNSSMTTRGFNYPWTSSGT, and RIPSETYSSSPSGAGS. The segment at 385–475 is disordered; that stretch reads TDPPLSVTES…YSSSPSGAGS (91 aa). Asn-435 carries N-linked (GlcNAc...) asparagine glycosylation. Asn-497 carries N-linked (GlcNAc...) asparagine glycosylation. A helical transmembrane segment spans residues 520 to 540; that stretch reads SWPVIVAALLFCCMILFGLGV. At 541–585 the chain is on the cytoplasmic side; it reads RKWCQYQKEIMERPPPFKPPPPPIKYTCIQEPNESDLPYHEMETL.

In terms of assembly, homodimer; disulfide-linked. Interacts with PVR. As to expression, expressed on normal T-cell lines and clones, and some transformed T-cells, but no other cultured cell lines tested. It is expressed at very low levels on activated B-cells.

It is found in the membrane. Its function is as follows. May be involved in adhesive interactions of activated T and NK cells during the late phase of the immune response. Promotes NK cell-target adhesion by interacting with PVR present on target cells. May function at a time after T and NK cells have penetrated the endothelium using integrins and selectins, when they are actively engaging diseased cells and moving within areas of inflammation. This chain is T-cell surface protein tactile (CD96), found in Homo sapiens (Human).